The following is a 252-amino-acid chain: Zinc import ATP-binding protein ZnuC (252 aa).

An ABC transporter domain is found at 5–220; it reads VTLNKISVTF…PEFIAMFGQR (216 aa). 37 to 44 provides a ligand contact to ATP; the sequence is GPNGAGKS.

Belongs to the ABC transporter superfamily. Zinc importer (TC 3.A.1.15.5) family. As to quaternary structure, the complex is composed of two ATP-binding proteins (ZnuC), two transmembrane proteins (ZnuB) and a solute-binding protein (ZnuA).

Its subcellular location is the cell inner membrane. It carries out the reaction Zn(2+)(out) + ATP(in) + H2O(in) = Zn(2+)(in) + ADP(in) + phosphate(in) + H(+)(in). In terms of biological role, part of the ABC transporter complex ZnuABC involved in zinc import. Responsible for energy coupling to the transport system. This chain is Zinc import ATP-binding protein ZnuC, found in Yersinia enterocolitica serotype O:8 / biotype 1B (strain NCTC 13174 / 8081).